Reading from the N-terminus, the 149-residue chain is Probable methylated-DNA--protein-cysteine methyltransferase (149 aa).

Residue C118 is the Alkyl group acceptor of the active site.

This sequence belongs to the MGMT family.

It carries out the reaction a 6-O-methyl-2'-deoxyguanosine in DNA + L-cysteinyl-[protein] = S-methyl-L-cysteinyl-[protein] + a 2'-deoxyguanosine in DNA. The enzyme catalyses a 4-O-methyl-thymidine in DNA + L-cysteinyl-[protein] = a thymidine in DNA + S-methyl-L-cysteinyl-[protein]. The polypeptide is Probable methylated-DNA--protein-cysteine methyltransferase (MGMT) (Acanthamoeba polyphaga (Amoeba)).